A 391-amino-acid chain; its full sequence is Aspartic protease 17 (391 aa).

The N-terminal stretch at 1 to 15 is a signal peptide; it reads MHLIFLLFLAPFCSA. Positions 65–385 constitute a Peptidase A1 domain; that stretch reads YLGNFTVGTP…DIGNARIGFA (321 aa). N-linked (GlcNAc...) asparagine glycosylation occurs at Asn-68. Asp-83 is an active-site residue. Asn-108 is a glycosylation site (N-linked (GlcNAc...) asparagine). Residue Asp-274 is part of the active site. Cys-309 and Cys-345 are disulfide-bonded.

It belongs to the peptidase A1 family. In terms of tissue distribution, expressed in intestinal cells.

The protein resides in the secreted. Aspartic proteinase. The sequence is that of Aspartic protease 17 from Caenorhabditis elegans.